The following is a 240-amino-acid chain: Mitochondrial transcription rescue factor 1 (240 aa).

A mitochondrion-targeting transit peptide spans 1–84; the sequence is MAMASVKLLA…ECIFPFSVRL (84 aa). A disordered region spans residues 95–127; it reads KKSLQKVDEEDSDEESHHDEMSEQEEELEDDPT. Phosphoserine occurs at positions 106 and 116. The segment covering 116 to 126 has biased composition (acidic residues); it reads SEQEEELEDDP. One can recognise an S4 RNA-binding domain in the interval 142–217; that stretch reads FRYDVVLKTG…LKKVFEEKTE (76 aa).

In terms of assembly, monomer. Interacts with POLRMT. Interacts (via S4 domain) with MTRFR (via C-terminus). Associates with mitoribosomal S39 large subunit, peptidyl tRNA and nascent chain.

The protein resides in the mitochondrion matrix. In terms of biological role, mitochondrial RNA-binding protein involved in mitochondrial transcription regulation. Functions as a protective factor to maintain proper mitochondrial RNA level during stress. Acts at the transcription level and its protective function depends on its RNA binding ability. Part of a mitoribosome-associated quality control pathway that prevents aberrant translation by responding to interruptions during elongation. As heterodimer with MTRF, ejects the unfinished nascent chain and peptidyl transfer RNA (tRNA), respectively, from stalled ribosomes. Recruitment of mitoribosome biogenesis factors to these quality control intermediates suggests additional roles for MTRES1 and MTRF during mitoribosome rescue. This Homo sapiens (Human) protein is Mitochondrial transcription rescue factor 1.